The following is a 66-amino-acid chain: Large ribosomal subunit protein bL33c (66 aa).

Belongs to the bacterial ribosomal protein bL33 family.

It is found in the plastid. The protein localises to the chloroplast. The protein is Large ribosomal subunit protein bL33c of Manihot esculenta (Cassava).